A 147-amino-acid polypeptide reads, in one-letter code: MRTFTPKPGDINRRWLVIDAEDVVLGRLASQTAILLRGKHKATYAPHVDGGDYVIIVNAAKVALTGSKRDQKVAYRHSGYPGGLKATSYVDLLEQNPEKAVEKAIRGMIPKNSLGRQVLSKLKVYAGAEHPHAAQQPEAYTIHQVAQ.

The protein belongs to the universal ribosomal protein uL13 family. In terms of assembly, part of the 50S ribosomal subunit.

Functionally, this protein is one of the early assembly proteins of the 50S ribosomal subunit, although it is not seen to bind rRNA by itself. It is important during the early stages of 50S assembly. In Kineococcus radiotolerans (strain ATCC BAA-149 / DSM 14245 / SRS30216), this protein is Large ribosomal subunit protein uL13.